A 2194-amino-acid polypeptide reads, in one-letter code: Supervillin (2194 aa).

The interval 1–174 (MKRKERIARR…SSYSRTELSG (174 aa)) is interaction with MYLK. Disordered regions lie at residues 35–98 (LEED…TQSL), 118–335 (EKYG…QRRH), 388–414 (PESISEGSWVGPAPQTVTKPPPSKVLE), 450–500 (EDRG…TERM), 513–563 (AVSQ…QTSK), 589–667 (RASR…KVDE), 685–719 (KSFDEKSVPKRRSRNAAVEQRLRRLQDRSHTQPVT), and 739–791 (HPVM…DSST). Ser-50 bears the Phosphoserine mark. The segment covering 87-98 (PYSSGIMDTQSL) has biased composition (polar residues). Basic and acidic residues-rich tracts occupy residues 139–161 (SRKDPEAAEKRGVRSERSAESSR) and 181–192 (ESKDYGLHRSDG). Residues Ser-245 and Ser-262 each carry the phosphoserine modification. Basic and acidic residues-rich tracts occupy residues 283–294 (PKHEWFLQKDSE) and 308–319 (KVREKLVREESA). Polar residues predominate over residues 320–330 (RSSPELTSESL). 2 positions are modified to phosphoserine: Ser-321 and Ser-322. The segment covering 455-467 (GRSQEAPSGTEDL) has biased composition (polar residues). The segment covering 540–551 (PPQLQALKAKAP) has biased composition (low complexity). 2 stretches are compositionally biased toward basic and acidic residues: residues 592 to 615 (RKPELHSRVEGSSEGPGVERERGS) and 626 to 635 (ENRKTSERFR). Ser-652 and Ser-686 each carry phosphoserine. The segment covering 704–714 (QRLRRLQDRSH) has biased composition (basic and acidic residues). Residues Ser-747 and Ser-781 each carry the phosphoserine modification. Residues 770 to 782 (LARDQTNESKDSA) are compositionally biased toward basic and acidic residues. The residue at position 829 (Tyr-829) is a Phosphotyrosine. The residue at position 831 (Thr-831) is a Phosphothreonine. A phosphoserine mark is found at Ser-893, Ser-899, Ser-903, Ser-947, Ser-979, and Ser-1031. A disordered region spans residues 1036–1077 (EFGEPTSEQTGAAAGKPAAPTATPVSWKPQDPSEQPQEKRYQ). Positions 1045–1059 (TGAAAGKPAAPTATP) are enriched in low complexity. Residues Ser-1099 and Ser-1205 each carry the phosphoserine modification. Thr-1210 bears the Phosphothreonine mark. Residues Ser-1214, Ser-1302, and Ser-1385 each carry the phosphoserine modification. The interaction with NEB stretch occupies residues 1399–1667 (SNVSLRSVNL…KFLDWTELKR (269 aa)). Gelsolin-like repeat units lie at residues 1421–1520 (KKLM…LGGQ), 1540–1662 (IETN…FLDW), 1732–1842 (ISVD…FQGG), 1861–1962 (WRLY…LGRR), and 1995–2102 (ATEF…FPSW). In terms of domain architecture, HP spans 2131 to 2194 (KLCKTIYPLA…VNLKKAKGLF (64 aa)).

This sequence belongs to the villin/gelsolin family. In terms of assembly, associates with F-actin. Interacts with NEB. Interacts with MYH9. Interacts with MYLK. Interacts with TASOR. Interacts with TRIP6 and DYNLT1. Interacts with KIF14; at midbody during cytokinesis.

Its subcellular location is the cell membrane. The protein localises to the cytoplasm. The protein resides in the cytoskeleton. It is found in the cell projection. It localises to the invadopodium. Its subcellular location is the podosome. The protein localises to the midbody. The protein resides in the cleavage furrow. Its function is as follows. Forms a high-affinity link between the actin cytoskeleton and the membrane. Is among the first costameric proteins to assemble during myogenesis and it contributes to myogenic membrane structure and differentiation. Appears to be involved in myosin II assembly. May modulate myosin II regulation through MLCK during cell spreading, an initial step in cell migration. May play a role in invadopodial function. In terms of biological role, may be involved in modulation of focal adhesions. Supervillin-mediated down-regulation of focal adhesions involves binding to TRIP6. Plays a role in cytokinesis through KIF14 interaction. The polypeptide is Supervillin (Bos taurus (Bovine)).